Reading from the N-terminus, the 771-residue chain is Rho GTPase-activating protein 26 (771 aa).

The BAR domain maps to 7–262 (EFSDCYLDSP…MKENPHEHLA (256 aa)). In terms of domain architecture, PH spans 265–369 (PFTMEGYLYV…WMEAMDGREP (105 aa)). The 186-residue stretch at 383-568 (AQLDNIGFSI…IIIENYEEMF (186 aa)) folds into the Rho-GAP domain. The interval 575 to 712 (PQTNSQLHLS…SSTSSDSSPV (138 aa)) is disordered. The span at 608–617 (HSSEKEEKRN) shows a compositional bias: basic and acidic residues. Low complexity predominate over residues 618–637 (SVNSSAESVSSSNANSSVNS). Composition is skewed to polar residues over residues 638 to 650 (TCTQ…NLNA) and 662 to 671 (RPNSLLNPKN). 2 stretches are compositionally biased toward low complexity: residues 673–683 (SGLLPSSLNPS) and 691–712 (PMVS…SSPV). Residues 713-771 (SVPRKAKALYACKAEHDSELSFSAGTVFENVCPSQEPGWLEGTLNGKTGLIPENYVEFL) enclose the SH3 domain.

Its subcellular location is the cell junction. The protein localises to the focal adhesion. The protein resides in the cytoplasm. It localises to the cytoskeleton. It is found in the endosome membrane. GTPase-activating protein for rhoa and cdc42. May be involved in the regulation of neosynthesized protein export through a Rab-endososomal dependent export route. The polypeptide is Rho GTPase-activating protein 26 (arhgap26) (Xenopus laevis (African clawed frog)).